The following is a 200-amino-acid chain: Glycerol-3-phosphate acyltransferase (200 aa).

Transmembrane regions (helical) follow at residues 9-29 (IIIGAYLIGSIPFGFLLAYFW), 54-74 (VPGMIVLILDMIKGISAVLLA), 81-101 (DIAVLGVALAVMAGHSWPLWL), 112-132 (GAGAILALSPMPLLLAFLVWL), 140-160 (YVSLGSILGAVSLPIWMALLN), and 165-185 (YLIFSVLVASFAVWKHSSNIG).

The protein belongs to the PlsY family. Probably interacts with PlsX.

The protein localises to the cell membrane. The catalysed reaction is an acyl phosphate + sn-glycerol 3-phosphate = a 1-acyl-sn-glycero-3-phosphate + phosphate. It participates in lipid metabolism; phospholipid metabolism. Functionally, catalyzes the transfer of an acyl group from acyl-phosphate (acyl-PO(4)) to glycerol-3-phosphate (G3P) to form lysophosphatidic acid (LPA). This enzyme utilizes acyl-phosphate as fatty acyl donor, but not acyl-CoA or acyl-ACP. This is Glycerol-3-phosphate acyltransferase from Desulforamulus reducens (strain ATCC BAA-1160 / DSM 100696 / MI-1) (Desulfotomaculum reducens).